The sequence spans 1687 residues: Genome polyprotein (1687 aa).

Residues Met-1–Arg-13 are compositionally biased toward polar residues. The interval Met-1 to Gln-56 is disordered. Positions Met-1–Lys-116 are interaction with host MAP1LC3A/LC3. Residues Glu-117 to Glu-341 form an interaction with NTPase region. Residues Ser-244–Glu-341 form an interaction with NS4 region. Host ER membrane association regions lie at residues Lys-261–Asn-292 and Trp-302–Glu-341. Residues Gly-342–Ala-518 form an interaction with NS1-2, NS4 and homooligomerization region. The SF3 helicase domain maps to Arg-476–Asp-641. Position 504-511 (Gly-504–Thr-511) interacts with ATP. The tract at residues Val-595–Asp-700 is important for mitochondrion targeting. Positions Asp-893–Glu-898 are acidic. Tyr-896 carries the O-(5'-phospho-RNA)-tyrosine modification. The interaction with host EIF4G stretch occupies residues Trp-978 to Glu-994. The 178-residue stretch at Ala-995–Glu-1172 folds into the Peptidase C37 domain. Active-site for 3CLpro activity residues include His-1024, Asp-1048, and Cys-1133. A RdRp catalytic domain is found at Arg-1416 to Lys-1537. Positions 1420 and 1422 each coordinate Mg(2+). Cys-1482 and Cys-1484 are disulfide-bonded. Residues Asp-1524, Glu-1525, and Ser-1569 each coordinate Mg(2+).

In terms of assembly, homodimer. Interacts with NTPase; this interaction increases the proapoptotic activity of the NTPase and is crucial for the formation of the viral replication complex. Interacts with NS4; this interaction is crucial for the formation of the viral replication complex. Interacts (via N-terminus) with host VAPA. Interacts with host VAPB. Monomer. As to quaternary structure, homooligomer. Interacts with NS1-2; this interaction increases the proapoptotic activity of the NTPase and is crucial for the formation of the viral replication complex. Interacts with NS4; this interaction increases the proapoptotic activity of the NTPase. Interacts with host G3BP1; this interaction leads to the redistribution of G3BP1 and its cellular partners to the viral replication complexes, thereby preventing the assembly of stress granules. In terms of assembly, homodimer. Monomer; in solution. Interacts with NTPase; this interaction increases the proapoptotic activity of the NTPase. Interacts with NS1-2; this interaction is crucial for the formation of the viral replication complex. As to quaternary structure, monomer. Interacts with the RNA-directed RNA polymerase; this interaction induces the multimerization of the RdRp and enhances its activity. Interacts with host IEF4E; this interaction plays a role in translation of viral proteins. Interacts (via C-terminus) with host IEF4G1 (via central domain); this interaction plays a role in translation of viral proteins. In terms of assembly, homohexamer; also forms fibrous hexameric oligomer. Interacts with the viral genome-linked protein; this interaction induces the multimerization of the RdRp and enhances its activity. Requires Mg(2+) as cofactor. Mn(2+) is required as a cofactor. Specific enzymatic cleavages in vivo yield mature proteins. 3CLpro is first autocatalytically cleaved, then processes the whole polyprotein. In terms of processing, cleaved by host CASP3/caspase 3 at 18-22 h.p.i. The cleavage allows NS1 secretion, which is essential for intestinal infection and resistance to IFN-lambda. Post-translationally, VPg is uridylylated by the polymerase and is covalently attached to the 5'-end of the polyadenylated genomic and subgenomic RNAs. This uridylylated form acts as a nucleotide-peptide primer for the polymerase.

The protein resides in the host endoplasmic reticulum membrane. The protein localises to the secreted. It localises to the host endosome membrane. It is found in the host mitochondrion. Its subcellular location is the host cytoplasm. The protein resides in the host perinuclear region. It catalyses the reaction a ribonucleoside 5'-triphosphate + H2O = a ribonucleoside 5'-diphosphate + phosphate + H(+). It carries out the reaction Endopeptidase with a preference for cleavage when the P1 position is occupied by Glu-|-Xaa and the P1' position is occupied by Gly-|-Yaa.. The catalysed reaction is RNA(n) + a ribonucleoside 5'-triphosphate = RNA(n+1) + diphosphate. With respect to regulation, inhibited by Suramin, Suramin-related compounds and NF023. Inhibited by PPNDS. Induces the proliferation of the host smooth ER membranes forming long tubular structures. These remodeled membranes probably form the viral factories that contain the replication complex. May play a role in viral replication by interacting with host VAPA, a vesicle-associated membrane protein that plays a role in SNARE-mediated vesicle fusion. This interaction may target replication complex to intracellular membranes. In terms of biological role, promotes intestinal tropism and persistent fecal shedding in strain CR6. This function requires Glu-94 and is present in persistant strains. Functionally, displays NTPase activity, but probably no helicase activity. Displays RNA chaperone-like activity and destabilizes dsRNA. Induces the formation of convoluted membranes derived from the host ER. These remodeled membranes probably form the viral factories that contain the replication complex. Initiates host cell death by targeting the mitochondrial outer membrane, leading to the permeabilization of mitochondria, programmed host cell death and viral egress. Externalization of host cardiolipin seems to be involved in the process. Probably plays a role in preventing the assembly of host stress granules. Its function is as follows. Probable key protein responsible for the formation of membrane alterations by the virus. Induces the formation of convoluted membranes derived from the host ER. These remodeled membranes probably form the viral factories that contain the replication complex. May play a role in targeting replication complex to intracellular membranes. Viral genome-linked protein is covalently linked to the 5'-end of the positive-strand, negative-strand genomic RNAs and subgenomic RNA. Acts as a genome-linked replication primer. May recruit ribosome to viral RNA thereby promoting viral proteins translation. Interacts with host translation initiation complex to allow the translation of viral proteins. Induces the formation of aggregates of RNA-directed RNA polymerase in the presence of RNA. Through its interaction with the viral RNA-directed RNA polymerase, plays a crucial role in enhancing the polymerase activity. In terms of biological role, processes the polyprotein. 3CLpro-RdRp is first released by autocleavage, then all other proteins are cleaved. May cleave host polyadenylate-binding protein thereby inhibiting cellular translation. Does not cleave host G3BP1. Functionally, replicates genomic and antigenomic RNA by recognizing replications specific signals. Also transcribes a subgenomic mRNA by initiating RNA synthesis internally on antigenomic RNA. This sgRNA codes for structural proteins. Catalyzes the covalent attachment VPg with viral RNAs. The protein is Genome polyprotein of Norovirus (isolate Mouse/NoV/United States/MNV1/2002/GV) (MNV-1).